Here is a 338-residue protein sequence, read N- to C-terminus: Ketol-acid reductoisomerase (NADP(+)) (338 aa).

Positions 1–181 constitute a KARI N-terminal Rossmann domain; it reads MKVFYDKDCD…GGGRAGIIET (181 aa). NADP(+)-binding positions include 24-27, arginine 47, and serine 52; that span reads YGSQ. The active site involves histidine 107. Glycine 133 contributes to the NADP(+) binding site. The KARI C-terminal knotted domain occupies 182–327; sequence NFREETETDL…AKLRAMMPWI (146 aa). Mg(2+) is bound by residues aspartate 190, glutamate 194, glutamate 226, and glutamate 230. Substrate is bound at residue serine 251.

Belongs to the ketol-acid reductoisomerase family. It depends on Mg(2+) as a cofactor.

It catalyses the reaction (2R)-2,3-dihydroxy-3-methylbutanoate + NADP(+) = (2S)-2-acetolactate + NADPH + H(+). It carries out the reaction (2R,3R)-2,3-dihydroxy-3-methylpentanoate + NADP(+) = (S)-2-ethyl-2-hydroxy-3-oxobutanoate + NADPH + H(+). It participates in amino-acid biosynthesis; L-isoleucine biosynthesis; L-isoleucine from 2-oxobutanoate: step 2/4. It functions in the pathway amino-acid biosynthesis; L-valine biosynthesis; L-valine from pyruvate: step 2/4. Involved in the biosynthesis of branched-chain amino acids (BCAA). Catalyzes an alkyl-migration followed by a ketol-acid reduction of (S)-2-acetolactate (S2AL) to yield (R)-2,3-dihydroxy-isovalerate. In the isomerase reaction, S2AL is rearranged via a Mg-dependent methyl migration to produce 3-hydroxy-3-methyl-2-ketobutyrate (HMKB). In the reductase reaction, this 2-ketoacid undergoes a metal-dependent reduction by NADPH to yield (R)-2,3-dihydroxy-isovalerate. This is Ketol-acid reductoisomerase (NADP(+)) from Janthinobacterium sp. (strain Marseille) (Minibacterium massiliensis).